A 106-amino-acid polypeptide reads, in one-letter code: NADH dehydrogenase [ubiquinone] iron-sulfur protein 5 (106 aa).

The CHCH domain maps to 30-74; sequence AGRCHAFEKEWIECAHGIGYTRAEKECKIEYDDFVECLLRQKTMR. 2 consecutive short sequence motifs (cx9C motif) follow at residues 33–43 and 56–66; these read CHAFEKEWIEC and CKIEYDDFVEC. Intrachain disulfides connect cysteine 33–cysteine 66 and cysteine 43–cysteine 56. Residues 84–106 form a disordered region; the sequence is DKLIKEGKYTPPPHHIGKGEPRP.

This sequence belongs to the complex I NDUFS5 subunit family. Mammalian complex I is composed of 45 different subunits. This is a component of the iron-sulfur (IP) fragment of the enzyme.

The protein localises to the mitochondrion inner membrane. It is found in the mitochondrion intermembrane space. Its function is as follows. Accessory subunit of the mitochondrial membrane respiratory chain NADH dehydrogenase (Complex I), that is believed not to be involved in catalysis. Complex I functions in the transfer of electrons from NADH to the respiratory chain. The immediate electron acceptor for the enzyme is believed to be ubiquinone. The chain is NADH dehydrogenase [ubiquinone] iron-sulfur protein 5 (NDUFS5) from Homo sapiens (Human).